Consider the following 416-residue polypeptide: Iron-regulated transcriptional activator AFT2 (416 aa).

Asp53 contacts Zn(2+). DNA contacts are provided by Arg54, His55, Lys58, Ile74, Glu75, Arg76, Ser77, Asp78, and Lys81. Residue His55 coordinates Zn(2+). Cys86 lines the Zn(2+) pocket. Ser88 is a binding site for DNA. Cys109 is a Zn(2+) binding site. Val119 and Arg120 together coordinate DNA. Zn(2+) is bound by residues His133 and His135. Residues Gln157 and Asn159 each contribute to the DNA site. The CDC [2Fe-2S] cluster binding motif signature appears at Cys187–Cys189.

As to quaternary structure, homodimer. Dimerization decreases the DNA-binding activity.

The protein resides in the nucleus. With respect to regulation, dimerization via the binding of Fe(2+) or a [2Fe-2S] cluster decreases the DNA-binding activity. Functionally, transcription factor required for iron homeostasis and resistance to oxidative stress. With AFT1, activates the gene expression in response to low-iron conditions, also called iron regulon. Recognizes the consensus iron-responsive element (Fe-RE) sequence 5'-CACCC-3' in the promoters of target genes. The transcription activation by AFT1 and AFT2 depends on the mitochondrial iron-sulfur protein biosynthesis pathway. In high iron condition, the presence of iron leads to dimerization, which in turn leads to a decrease in DNA affinity. This is Iron-regulated transcriptional activator AFT2 from Saccharomyces cerevisiae (strain ATCC 204508 / S288c) (Baker's yeast).